A 334-amino-acid polypeptide reads, in one-letter code: L-lactate dehydrogenase B chain (334 aa).

Residues 30–58 (GQVGMACAVSILLRDLCDELALVDVMEDR) and Arg-100 each bind NAD(+). Substrate is bound by residues Arg-107, Asn-139, and Arg-170. Asn-139 contributes to the NAD(+) binding site. The active-site Proton acceptor is His-194. Thr-249 provides a ligand contact to substrate.

Belongs to the LDH/MDH superfamily. LDH family. In terms of assembly, homotetramer.

Its subcellular location is the cytoplasm. It catalyses the reaction (S)-lactate + NAD(+) = pyruvate + NADH + H(+). It participates in fermentation; pyruvate fermentation to lactate; (S)-lactate from pyruvate: step 1/1. Its function is as follows. Interconverts simultaneously and stereospecifically pyruvate and lactate with concomitant interconversion of NADH and NAD(+). The chain is L-lactate dehydrogenase B chain (ldhb) from Fundulus heteroclitus (Killifish).